Consider the following 729-residue polypeptide: Pentatricopeptide repeat-containing protein At5g01110 (729 aa).

Residues Thr-26–Ala-45 form a disordered region. Positions Ser-27 to Ala-45 are enriched in low complexity. PPR repeat units follow at residues Thr-112–Arg-147, Asn-164–Val-198, Ser-199–Ile-233, Asn-234–Pro-268, Asp-269–Pro-303, Gly-304–Pro-338, Asp-339–Pro-373, Asp-374–Pro-408, Asp-409–Met-443, Asp-444–Pro-478, Asp-479–Leu-513, Asp-514–Pro-548, Thr-549–Pro-583, Thr-584–Pro-618, Asp-619–Glu-649, Asp-656–Pro-690, and Asp-691–Pro-725.

The protein belongs to the PPR family. P subfamily.

In Arabidopsis thaliana (Mouse-ear cress), this protein is Pentatricopeptide repeat-containing protein At5g01110.